Consider the following 1425-residue polypeptide: MHPSNPKVRSSPSGNTQSSPKSKQEVMVRPPTVMSPSGNPQLDSKFSNQGKPGGSASQSQPSPCDSKSGGHTPKALPGPGGSMGLKNGAGNGAKGKGKRERSISADSFDQRDPGTPNDDSDIKECNSADHIKSQESQHTPHSMTPSTATAPRSSTPSHGQTPAPEPISAQKTPAKVVYVFSTEMANKAAEAVLKGQVETIVSFHIQNISNSKSERSTAPLNTQIPTLRNDPKPLPQQPPAPANQDQNSSQNARLQPTPPIQAPAPKPTAAPRPLDRESPGVENKLIPPVGSPGSSTPLPPDGTGPNSTPNNRAVTPVSQGSNSSSADPKAPPPPPVSGGEPPTLGENPDGLSQEQLEHRERSLQTLRDIQRMLFPDEKEFTAGQTGGPQQNTGVLDGPQKKPDGPIQAMMSQSQSLGKGPGPRTDVGAPFGPQGHRDVPFSPDEMVPPNMSSQSGPIGPDHLDHMTPEQIAWLKLQQEFYEEKRRKQEQVVVQQCSLQDMMVHQHGPRGVVRGPPPPYQMAPGEGWAPGAEPFPDGINISHSLPPRGMAPHPNMPGSQMRLPGFAGMINSEMEGPNVPNPASRPGLSGVSWPDDVPKIPDGRNFPPGQGVFSGPGRGERFPNPQGLSEEMFQQQLAEKQLALPPGMSMEGIRPGMEMNRMIPGSQRHMEPGSNPIFPRIPVEGPLSPSRGDFPKGMPPQIGPGRELEFGMVPGGMKGEVNLNVNMGSSSQMIPQKMREAGAGPEEMMKLRPGSSEMLPAQQKMVPLPFGEHPQQEYGVGPRPFLPMSQGPGSNSGLRNLREPIGPDQRTNSRLSHMPPLPLNPSSNPTSLSTAPPVQRGLGRKPLDISVAGSQVHSPGINPLKSPTMHQVQSPMLGSPSGNLKSPQTPSQLAGMLAGPAAAASIKSPPVLGSAAASPVHLKSPSLPAPSPGWTSSPKPPLQSPGIPPNHKAPLTMASPAMLGSVESGGPPPPTASQPASVNIPGSLPSSTPYPMPPEPTLSQNPLSIMMSRMSKFAMPSSTPLYHDAIKTVASSDDDSPPARSPNLPSMNSMPGMGINTQNPRISGPNPVVPMPTLSPMGMTQPLSHSNQMPSPNAMGPSIPPHGVPMGPGLMSHNPIMGHGSQEPPMVPQGRMGFPQGFPPVQSPPQQVPFPHNGPTGGQGNFPGGIGFPGEGPLGRPSNLPQSSADPALCKPGGPGAPDSFTVLGNSMPSVFTDPDLQEVIRPGATGIPEFDLSRIIPSEKPSQTLQYFPRGEVPGRKQPQGPGPGFSHMQGMMSDQAPRMGLALPGMGGPGPVGTPDIPLGTSPSMPGHNPMRPPAFLQQGMMGPHHRMMSPAQSTVPGPATLMTNPAAAVGMIPGKDRGPAGLYTHPGPVGSPGMMMSMQGMMGPQQNIMIPPQMRPRGMAADVGMGGFSQGPGNPGNMMF.

Positions 1–172 (MHPSNPKVRS…APEPISAQKT (172 aa)) are disordered. Composition is skewed to polar residues over residues 7–21 (KVRS…SSPK) and 34–48 (MSPS…KFSN). Low complexity predominate over residues 54–63 (GSASQSQPSP). Residues 78 to 94 (GPGGSMGLKNGAGNGAK) show a composition bias toward gly residues. 2 stretches are compositionally biased toward basic and acidic residues: residues 100–112 (ERSI…DQRD) and 120–135 (SDIK…KSQE). Position 104 is a phosphoserine (serine 104). Over residues 144-157 (TPSTATAPRSSTPS) the composition is skewed to low complexity. Phosphoserine is present on serine 157. Threonine 172 carries the post-translational modification Phosphothreonine. The interval 177 to 205 (VYVFSTEMANKAAEAVLKGQVETIVSFHI) is interaction with PYGO1. Polar residues predominate over residues 207 to 226 (NISNSKSERSTAPLNTQIPT). 2 disordered regions span residues 207–441 (NISN…VPFS) and 577–624 (VPNP…PNPQ). Composition is skewed to pro residues over residues 232-241 (KPLPQQPPAP) and 256-270 (PTPP…PTAA). The span at 304–320 (GPNSTPNNRAVTPVSQG) shows a compositional bias: polar residues. Threonine 315 carries the post-translational modification Phosphothreonine. Phosphoserine is present on residues serine 318 and serine 352. Residues 355–380 (QLEHRERSLQTLRDIQRMLFPDEKEF) show a composition bias toward basic and acidic residues. An interaction with CTNNB1 region spans residues 358-374 (HRERSLQTLRDIQRMLF). Phosphoserine occurs at positions 686 and 688. 4 disordered regions span residues 781–1003 (RPFL…LSQN), 1031–1051 (VASS…SMNS), 1153–1199 (PHNG…GPGA), and 1252–1275 (PRGE…MQGM). Residue arginine 800 is modified to Asymmetric dimethylarginine. Low complexity predominate over residues 822–835 (NPSSNPTSLSTAPP). Position 843 is an N6-acetyllysine (lysine 843). Polar residues predominate over residues 866 to 890 (TMHQVQSPMLGSPSGNLKSPQTPSQ). Residues 891-902 (LAGMLAGPAAAA) are compositionally biased toward low complexity. A phosphoserine mark is found at serine 906 and serine 916. The segment covering 936–946 (PKPPLQSPGIP) has biased composition (pro residues). Residues 1157 to 1175 (PTGGQGNFPGGIGFPGEGP) are compositionally biased toward gly residues.

The protein belongs to the BCL9 family. As to quaternary structure, binds to beta-catenin (CTNNB1), PYGO1 and PYGO2; the interaction with PYGO1 increases PYGO1 affinity to histone H3 methylated at 'Lys 4'.

It localises to the nucleus. Promotes beta-catenin's transcriptional activity. Involved in signal transduction through the Wnt pathway. The sequence is that of B-cell CLL/lymphoma 9 protein (Bcl9) from Mus musculus (Mouse).